The primary structure comprises 441 residues: Mitochondrial distribution and morphology protein 12 (441 aa).

Residues 1-441 (MSIDIDWERA…VYPSFWTFLV (441 aa)) enclose the SMP-LTD domain. Disordered regions lie at residues 68 to 89 (DFYEDGDEDLSVSSEEQSPMRE) and 183 to 289 (RAVT…RMRE). Composition is skewed to polar residues over residues 226-245 (SRPSTANTGNTLLSRGSVST) and 253-263 (PSQTLLANNPG).

It belongs to the MDM12 family. Component of the ER-mitochondria encounter structure (ERMES) or MDM complex, composed of MMM1, MDM10, MDM12 and MDM34. An MMM1 homodimer associates with one molecule of MDM12 on each side in a pairwise head-to-tail manner, and the SMP-LTD domains of MMM1 and MDM12 generate a continuous hydrophobic tunnel for phospholipid trafficking.

It is found in the mitochondrion outer membrane. The protein localises to the endoplasmic reticulum membrane. Functionally, component of the ERMES/MDM complex, which serves as a molecular tether to connect the endoplasmic reticulum (ER) and mitochondria. Components of this complex are involved in the control of mitochondrial shape and protein biogenesis, and function in nonvesicular lipid trafficking between the ER and mitochondria. MDM12 is required for the interaction of the ER-resident membrane protein MMM1 and the outer mitochondrial membrane-resident beta-barrel protein MDM10. The MDM12-MMM1 subcomplex functions in the major beta-barrel assembly pathway that is responsible for biogenesis of all mitochondrial outer membrane beta-barrel proteins, and acts in a late step after the SAM complex. The MDM10-MDM12-MMM1 subcomplex further acts in the TOM40-specific pathway after the action of the MDM12-MMM1 complex. Essential for establishing and maintaining the structure of mitochondria and maintenance of mtDNA nucleoids. This Paracoccidioides lutzii (strain ATCC MYA-826 / Pb01) (Paracoccidioides brasiliensis) protein is Mitochondrial distribution and morphology protein 12.